Consider the following 135-residue polypeptide: uncharacterized protein (135 aa).

This is an uncharacterized protein from Mycoplasma pneumoniae (strain ATCC 29342 / M129 / Subtype 1) (Mycoplasmoides pneumoniae).